The following is a 198-amino-acid chain: Glycerol-3-phosphate acyltransferase 1 (198 aa).

5 consecutive transmembrane segments (helical) span residues 5-25 (ALLA…AWLA), 52-72 (GPAL…VLLA), 81-101 (WAAL…FLAF), 111-131 (FGVI…LAIA), and 138-158 (FVSA…LVLP).

It belongs to the PlsY family. Probably interacts with PlsX.

The protein localises to the cell membrane. The enzyme catalyses an acyl phosphate + sn-glycerol 3-phosphate = a 1-acyl-sn-glycero-3-phosphate + phosphate. It functions in the pathway lipid metabolism; phospholipid metabolism. In terms of biological role, catalyzes the transfer of an acyl group from acyl-phosphate (acyl-PO(4)) to glycerol-3-phosphate (G3P) to form lysophosphatidic acid (LPA). This enzyme utilizes acyl-phosphate as fatty acyl donor, but not acyl-CoA or acyl-ACP. This Deinococcus radiodurans (strain ATCC 13939 / DSM 20539 / JCM 16871 / CCUG 27074 / LMG 4051 / NBRC 15346 / NCIMB 9279 / VKM B-1422 / R1) protein is Glycerol-3-phosphate acyltransferase 1.